Reading from the N-terminus, the 318-residue chain is Replication factor C small subunit (318 aa).

43 to 50 (GSVGTGKT) is a binding site for ATP.

Belongs to the activator 1 small subunits family. RfcS subfamily. As to quaternary structure, heteromultimer composed of small subunits (RfcS) and large subunits (RfcL).

Its function is as follows. Part of the RFC clamp loader complex which loads the PCNA sliding clamp onto DNA. The polypeptide is Replication factor C small subunit (Thermoplasma acidophilum (strain ATCC 25905 / DSM 1728 / JCM 9062 / NBRC 15155 / AMRC-C165)).